We begin with the raw amino-acid sequence, 457 residues long: Argininosuccinate lyase (457 aa).

This sequence belongs to the lyase 1 family. Argininosuccinate lyase subfamily.

Its subcellular location is the cytoplasm. It carries out the reaction 2-(N(omega)-L-arginino)succinate = fumarate + L-arginine. The protein operates within amino-acid biosynthesis; L-arginine biosynthesis; L-arginine from L-ornithine and carbamoyl phosphate: step 3/3. The polypeptide is Argininosuccinate lyase (Escherichia coli O7:K1 (strain IAI39 / ExPEC)).